The following is a 333-amino-acid chain: Probable xyloglucan endotransglucosylase/hydrolase protein 27 (333 aa).

A signal peptide spans 1 to 20 (METLSRLLVFMSLFSGLVSG). Residues 21 to 223 (FALQNLPITS…YKYAPYIARF (203 aa)) form the GH16 domain. The Nucleophile role is filled by glutamate 108. Catalysis depends on glutamate 112, which acts as the Proton donor. Xyloglucan contacts are provided by residues glutamate 112 and 125 to 127 (QTN). An N-linked (GlcNAc...) asparagine glycan is attached at asparagine 131. Xyloglucan-binding positions include 135 to 139 (HSGRE), 202 to 203 (KW), glycine 207, and arginine 282. Cysteine 277 and cysteine 290 are disulfide-bonded. Residues 311–333 (IPRRHRNGKHRSKRSRVDGTESI) form a disordered region. The span at 312–324 (PRRHRNGKHRSKR) shows a compositional bias: basic residues.

It belongs to the glycosyl hydrolase 16 family. XTH group 3 subfamily. Contains at least one intrachain disulfide bond essential for its enzymatic activity. As to expression, expressed in 7 day old seedlings, roots, hypocotyls, rosette leaves, internodes between nodes bearing axillary shoots, nodes bearing flowers, flower buds, anthers and siliques.

It localises to the secreted. Its subcellular location is the cell wall. It is found in the extracellular space. The protein localises to the apoplast. The enzyme catalyses breaks a beta-(1-&gt;4) bond in the backbone of a xyloglucan and transfers the xyloglucanyl segment on to O-4 of the non-reducing terminal glucose residue of an acceptor, which can be a xyloglucan or an oligosaccharide of xyloglucan.. Catalyzes xyloglucan endohydrolysis (XEH) and/or endotransglycosylation (XET). Cleaves and religates xyloglucan polymers, an essential constituent of the primary cell wall, and thereby participates in cell wall construction of growing tissues. Required for cell wall modification during the development of tracheary elements. In Arabidopsis thaliana (Mouse-ear cress), this protein is Probable xyloglucan endotransglucosylase/hydrolase protein 27 (XTH27).